The sequence spans 477 residues: MANMQGLVERLERAVSRLESLSAESHRPPGNCGEVNGVIGGVAPSVEAFDKLMDSMVAEFLKNSRILAGDVETHAEMVHSAFQAQRAFLLMASQYQQPHENDVAALLKPISEKIQEIQTFRERNRGSNMFNHLSAVSESIPALGWIAVSPKPGPYVKEMNDAATFYTNRVLKDYKHSDLRHVDWVKSYLNIWSELQAYIKEHHTTGLTWSKTGPVASTVSAFSVLSSGPGLPPPPPPPPPPGPPPLLENEGKKEESSPSRSALFAQLNQGEAITKGLRHVTDDQKTYKNPSLRAQGGQTRSPTKSHTPSPTSPKSYPSQKHAPVLELEGKKWRVEYQEDRNDLVISETELKQVAYIFKCEKSTLQIKGKVNSIIIDNCKKLGLVFDNVVGIVEVINSQDIQIQVMGRVPTISINKTEGCHIYLSEDALDCEIVSAKSSEMNILIPQDGDYREFPIPEQFKTAWDGSKLITEPAEIMA.

Alanine 2 carries the N-acetylalanine modification. 2 disordered regions span residues valine 224–serine 261 and threonine 274–proline 323. The segment covering glycine 230–leucine 246 has biased composition (pro residues). Serine 301 and serine 309 each carry phosphoserine. Residues serine 301–lysine 320 show a composition bias toward low complexity. Positions proline 317–isoleucine 455 constitute a C-CAP/cofactor C-like domain.

Belongs to the CAP family.

It localises to the cell membrane. In terms of biological role, involved in the regulation of actin polymerization. This is Adenylyl cyclase-associated protein 2 (CAP2) from Pongo abelii (Sumatran orangutan).